The primary structure comprises 570 residues: Multidrug and toxin extrusion protein 1 (570 aa).

Methionine 1 carries the N-acetylmethionine modification. Residues 1–37 are Cytoplasmic-facing; it reads MEAPEEPAPVRGGPEATLEVRGSRCLRLSAFREELRA. The chain crosses the membrane as a helical span at residues 38–58; the sequence is LLVLAGPAFLVQLMVFLISFI. Residues 59–72 lie on the Extracellular side of the membrane; that stretch reads SSVFCGHLGKLELD. Residues 73–93 traverse the membrane as a helical segment; the sequence is AVTLAIAVINVTGVSVGFGLS. Topologically, residues 94-123 are cytoplasmic; that stretch reads SACDTLISQTYGSQNLKHVGVILQRSALVL. Residues 124–144 form a helical membrane-spanning segment; it reads LLCCFPCWALFLNTQHILLLF. Over 145–152 the chain is Extracellular; the sequence is RQDPDVSR. Residues 153–173 traverse the membrane as a helical segment; that stretch reads LTQTYVTIFIPALPATFLYML. Residues 174–176 lie on the Cytoplasmic side of the membrane; the sequence is QVK. The helical transmembrane segment at 177-197 threads the bilayer; it reads YLLNQGIVLPQIVTGVAANLV. The Extracellular portion of the chain corresponds to 198–216; that stretch reads NALANYLFLHQLHLGVIGS. A helical transmembrane segment spans residues 217-237; it reads ALANLISQYTLALLLFLYILG. Topologically, residues 238–256 are cytoplasmic; that stretch reads KKLHQATWGGWSLECLQDW. Residues 257–276 form a helical membrane-spanning segment; the sequence is ASFLRLAIPSMLMLCMEWWA. At 277–295 the chain is on the extracellular side; it reads YEVGSFLSGILGMVELGAQ. A helical membrane pass occupies residues 296-316; it reads SIVYELAIIVYMVPAGFSVAA. The Cytoplasmic segment spans residues 317 to 336; that stretch reads SVRVGNALGAGDMEQARKSS. The chain crosses the membrane as a helical span at residues 337-357; the sequence is TVSLLITVLFAVAFSVLLLSC. Residues 358–370 lie on the Extracellular side of the membrane; the sequence is KDHVGYIFTTDRD. A helical transmembrane segment spans residues 371–391; that stretch reads IINLVAQVVPIYAVSHLFEAL. Residues 392–408 are Cytoplasmic-facing; that stretch reads ACTSGGVLRGSGNQKVG. The chain crosses the membrane as a helical span at residues 409–429; the sequence is AIVNTIGYYVVGLPIGIALMF. The Extracellular portion of the chain corresponds to 430-437; that stretch reads ATTLGVMG. The chain crosses the membrane as a helical span at residues 438–458; it reads LWSGIIICTVFQAVCFLGFII. Topologically, residues 459 to 546 are cytoplasmic; it reads QLNWKKACQQ…LSRKQLVLRR (88 aa). The disordered stretch occupies residues 508–534; it reads DVGKTGEPQSDQQMRQEEPLPEHPQDG. The segment covering 521 to 533 has biased composition (basic and acidic residues); the sequence is MRQEEPLPEHPQD. Residues 547 to 567 traverse the membrane as a helical segment; the sequence is GLLLLGVFLILLVGILVRFYV. The Extracellular segment spans residues 568 to 570; it reads RIQ.

The protein belongs to the multi antimicrobial extrusion (MATE) (TC 2.A.66.1) family. As to expression, widely expressed. The highest expression is found in adrenal gland, and to a lower extent in liver, skeletal muscle and kidney. In testis, primarily localized throughout the adluminal compartment of the seminiferous tubules with expression at the peritubular myoid cells and Leydig cells.

The protein localises to the cell membrane. It is found in the apical cell membrane. The enzyme catalyses thiamine(out) + H(+)(in) = thiamine(in) + H(+)(out). It carries out the reaction estrone 3-sulfate(in) + H(+)(out) = estrone 3-sulfate(out) + H(+)(in). The catalysed reaction is creatinine(in) + H(+)(out) = creatinine(out) + H(+)(in). It catalyses the reaction agmatine(in) + H(+)(out) = agmatine(out) + H(+)(in). Its function is as follows. Multidrug efflux pump that functions as a H(+)/organic cation antiporter. Plays a physiological role in the excretion of cationic compounds including endogenous metabolites, drugs, toxins through the kidney and liver, into urine and bile respectively. Mediates the efflux of endogenous compounds such as creatinine, vitamin B1/thiamine, agmatine and estrone-3-sulfate. May also contribute to regulate the transport of cationic compounds in testis across the blood-testis-barrier. This chain is Multidrug and toxin extrusion protein 1, found in Homo sapiens (Human).